Reading from the N-terminus, the 389-residue chain is Na(+)/H(+) antiporter NhaA (389 aa).

11 helical membrane passes run I17 to F37, L59 to V79, S95 to F115, A124 to L144, V154 to F174, S177 to L197, L213 to I233, F261 to L281, I292 to V312, I328 to L348, and L363 to V383.

It belongs to the NhaA Na(+)/H(+) (TC 2.A.33) antiporter family.

The protein localises to the cell inner membrane. The catalysed reaction is Na(+)(in) + 2 H(+)(out) = Na(+)(out) + 2 H(+)(in). Na(+)/H(+) antiporter that extrudes sodium in exchange for external protons. This Shewanella oneidensis (strain ATCC 700550 / JCM 31522 / CIP 106686 / LMG 19005 / NCIMB 14063 / MR-1) protein is Na(+)/H(+) antiporter NhaA.